A 163-amino-acid polypeptide reads, in one-letter code: Phosphopantetheine adenylyltransferase (163 aa).

Residue Thr10 participates in substrate binding. ATP-binding positions include 10–11 (TF) and His18. Residues Lys42, Leu74, and Arg88 each contribute to the substrate site. ATP contacts are provided by residues 89–91 (GLR), Glu99, and 124–130 (NSFISST).

This sequence belongs to the bacterial CoaD family. In terms of assembly, homohexamer. Mg(2+) serves as cofactor.

It localises to the cytoplasm. It carries out the reaction (R)-4'-phosphopantetheine + ATP + H(+) = 3'-dephospho-CoA + diphosphate. Its pathway is cofactor biosynthesis; coenzyme A biosynthesis; CoA from (R)-pantothenate: step 4/5. Functionally, reversibly transfers an adenylyl group from ATP to 4'-phosphopantetheine, yielding dephospho-CoA (dPCoA) and pyrophosphate. The sequence is that of Phosphopantetheine adenylyltransferase from Shewanella sp. (strain MR-4).